Reading from the N-terminus, the 358-residue chain is Phenylalanine--tRNA ligase alpha subunit (358 aa).

Glutamate 279 contributes to the Mg(2+) binding site.

The protein belongs to the class-II aminoacyl-tRNA synthetase family. Phe-tRNA synthetase alpha subunit type 1 subfamily. Tetramer of two alpha and two beta subunits. It depends on Mg(2+) as a cofactor.

The protein localises to the cytoplasm. The enzyme catalyses tRNA(Phe) + L-phenylalanine + ATP = L-phenylalanyl-tRNA(Phe) + AMP + diphosphate + H(+). The polypeptide is Phenylalanine--tRNA ligase alpha subunit (Variovorax paradoxus (strain S110)).